We begin with the raw amino-acid sequence, 855 residues long: Glucans biosynthesis glucosyltransferase H (855 aa).

6 helical membrane passes run 142–162 (ILLT…KGIL), 196–216 (ILVL…TALM), 515–535 (VFLT…FLVL), 572–592 (LFST…ILIW), 606–626 (TLSM…RMIF), and 682–702 (FLWW…VSVI).

The protein belongs to the glycosyltransferase 2 family. OpgH subfamily.

It is found in the cell inner membrane. The protein operates within glycan metabolism; osmoregulated periplasmic glucan (OPG) biosynthesis. Its function is as follows. Involved in the biosynthesis of osmoregulated periplasmic glucans (OPGs). The protein is Glucans biosynthesis glucosyltransferase H of Pseudomonas entomophila (strain L48).